We begin with the raw amino-acid sequence, 152 residues long: Putative NrdI-like protein (152 aa).

Belongs to the NrdI family.

This is Putative NrdI-like protein from Streptococcus pyogenes serotype M18 (strain MGAS8232).